We begin with the raw amino-acid sequence, 227 residues long: Cytidylate kinase (227 aa).

Position 12–20 (Gly-12–Thr-20) interacts with ATP.

The protein belongs to the cytidylate kinase family. Type 1 subfamily.

The protein resides in the cytoplasm. The enzyme catalyses CMP + ATP = CDP + ADP. It catalyses the reaction dCMP + ATP = dCDP + ADP. The protein is Cytidylate kinase of Shigella boydii serotype 18 (strain CDC 3083-94 / BS512).